Reading from the N-terminus, the 399-residue chain is S-adenosylmethionine synthase (399 aa).

His19 lines the ATP pocket. Asp21 lines the Mg(2+) pocket. Glu47 contributes to the K(+) binding site. Residues Glu60 and Gln103 each contribute to the L-methionine site. The interval 103-113 is flexible loop; the sequence is QSPDIAQGVNQ. ATP contacts are provided by residues 179–181, 246–247, Asp255, 261–262, Ala278, and Lys282; these read DGK, RF, and RK. Asp255 provides a ligand contact to L-methionine. Lys286 is a binding site for L-methionine.

It belongs to the AdoMet synthase family. As to quaternary structure, homotetramer; dimer of dimers. Mg(2+) serves as cofactor. It depends on K(+) as a cofactor.

It is found in the cytoplasm. The catalysed reaction is L-methionine + ATP + H2O = S-adenosyl-L-methionine + phosphate + diphosphate. Its pathway is amino-acid biosynthesis; S-adenosyl-L-methionine biosynthesis; S-adenosyl-L-methionine from L-methionine: step 1/1. Its function is as follows. Catalyzes the formation of S-adenosylmethionine (AdoMet) from methionine and ATP. The overall synthetic reaction is composed of two sequential steps, AdoMet formation and the subsequent tripolyphosphate hydrolysis which occurs prior to release of AdoMet from the enzyme. This is S-adenosylmethionine synthase from Halalkalibacterium halodurans (strain ATCC BAA-125 / DSM 18197 / FERM 7344 / JCM 9153 / C-125) (Bacillus halodurans).